Here is a 310-residue protein sequence, read N- to C-terminus: MRKLILCNPRGFCSGVVRAIQVVEVALEKWGAPIYVKHEIVHNRHVVNALRAKGAIFVEELVDVPEGERVIYSAHGIPPSVRAEAKARKLIDIDATCGLVTKVHSAAKLYASKGYKIILIGHKKHVEVIGIVGEVPEHITVVEKVADVEALPFSSDTPLFYITQTTLSLDDVQEISSALLKRYPSIITLPSSSICYATTNRQKALRSVLSRVNYVYVVGDVNSSNSNRLREVALRRGVPADLINNPEDIDTNIVNHSGDIAMTAGASTPEDVVQACIRKLSSLIPGLQVENDIFAVEDVVFQLPKELRCS.

Residue C13 coordinates [4Fe-4S] cluster. (2E)-4-hydroxy-3-methylbut-2-enyl diphosphate contacts are provided by H42 and H75. H42 and H75 together coordinate dimethylallyl diphosphate. Isopentenyl diphosphate is bound by residues H42 and H75. C97 is a binding site for [4Fe-4S] cluster. H125 contributes to the (2E)-4-hydroxy-3-methylbut-2-enyl diphosphate binding site. H125 serves as a coordination point for dimethylallyl diphosphate. Residue H125 participates in isopentenyl diphosphate binding. Residue E127 is the Proton donor of the active site. Position 165 (T165) interacts with (2E)-4-hydroxy-3-methylbut-2-enyl diphosphate. Position 195 (C195) interacts with [4Fe-4S] cluster. (2E)-4-hydroxy-3-methylbut-2-enyl diphosphate is bound by residues S223, S224, N225, and S267. Positions 223, 224, 225, and 267 each coordinate dimethylallyl diphosphate. Isopentenyl diphosphate contacts are provided by S223, S224, N225, and S267.

The protein belongs to the IspH family. The cofactor is [4Fe-4S] cluster.

The catalysed reaction is isopentenyl diphosphate + 2 oxidized [2Fe-2S]-[ferredoxin] + H2O = (2E)-4-hydroxy-3-methylbut-2-enyl diphosphate + 2 reduced [2Fe-2S]-[ferredoxin] + 2 H(+). It carries out the reaction dimethylallyl diphosphate + 2 oxidized [2Fe-2S]-[ferredoxin] + H2O = (2E)-4-hydroxy-3-methylbut-2-enyl diphosphate + 2 reduced [2Fe-2S]-[ferredoxin] + 2 H(+). The protein operates within isoprenoid biosynthesis; dimethylallyl diphosphate biosynthesis; dimethylallyl diphosphate from (2E)-4-hydroxy-3-methylbutenyl diphosphate: step 1/1. It functions in the pathway isoprenoid biosynthesis; isopentenyl diphosphate biosynthesis via DXP pathway; isopentenyl diphosphate from 1-deoxy-D-xylulose 5-phosphate: step 6/6. Functionally, catalyzes the conversion of 1-hydroxy-2-methyl-2-(E)-butenyl 4-diphosphate (HMBPP) into a mixture of isopentenyl diphosphate (IPP) and dimethylallyl diphosphate (DMAPP). Acts in the terminal step of the DOXP/MEP pathway for isoprenoid precursor biosynthesis. The chain is 4-hydroxy-3-methylbut-2-enyl diphosphate reductase from Chlamydia pneumoniae (Chlamydophila pneumoniae).